Consider the following 306-residue polypeptide: Arginase (306 aa).

Residues H96, D123, H125, and D127 each contribute to the Mn(2+) site. Residues 125 to 129, 136 to 138, and D178 contribute to the substrate site; these read HTDFH and SGN. Mn(2+) contacts are provided by D226 and D228. T240 and E271 together coordinate substrate.

Belongs to the arginase family. The cofactor is Mn(2+).

It catalyses the reaction L-arginine + H2O = urea + L-ornithine. It participates in nitrogen metabolism; urea cycle; L-ornithine and urea from L-arginine: step 1/1. The polypeptide is Arginase (arcB) (Brucella abortus biovar 1 (strain 9-941)).